The sequence spans 948 residues: Coatomer subunit beta-2 (948 aa).

HEAT repeat units follow at residues 49 to 87, 92 to 126, 127 to 164, 274 to 311, 312 to 349, and 391 to 428; these read ETIP…TDSK, PEMI…MKET, EIVE…LPHG, TAIR…TLHR, DIMV…HHNI, and EVAS…TNPK.

Oligomeric complex that consists of at least the alpha, beta, beta', gamma, delta, epsilon and zeta subunits.

Its subcellular location is the cytoplasm. The protein localises to the golgi apparatus membrane. It is found in the cytoplasmic vesicle. It localises to the COPI-coated vesicle membrane. Its function is as follows. The coatomer is a cytosolic protein complex that binds to dilysine motifs and reversibly associates with Golgi non-clathrin-coated vesicles, which further mediate biosynthetic protein transport from the ER, via the Golgi up to the trans Golgi network. Coatomer complex is required for budding from Golgi membranes, and is essential for the retrograde Golgi-to-ER transport of dilysine-tagged proteins. The sequence is that of Coatomer subunit beta-2 from Arabidopsis thaliana (Mouse-ear cress).